The primary structure comprises 867 residues: MSSGAPLNVTNPNYDIEESRFGKIVCYDQSLLFEKREQKGWESGSTLASSLPFFITQLFVANLSYRVLYYLTRPLYLPPFVAQILCGLLFSPSVLGNTRFIIAHVFPYRFTMVLETFANLALVYNIFLLGLGMDLRMVRITELKPVIIAFTGLLVALPVGAFLYYLPGNGHPDKIISGCVFWSVALACTNFPDLARILADLKLLRSDMGRTAMCAAIVTDLCTWVLLVFGFASFSKSGTWNKMMPFVIITTAIFVLLCIFVIRPGIAWIFAKTVKAGHVGDTHVWFILGGVVLCGLITDACGVHSITGAFLFGLSIPHDHIIRNMIEEKLHDFLSGILMPLFYIICGLRADIGFMLQFTDKFMMVVVICSSFLVKIVTTVITSLFMHIPMRDAFAIGALMNTKGTLSLVVLNAGRDTKALDSPMYTHMTIALLVMSLVVEPLLAFAYKPKKKLAHYKHRTVQKIKGETELRVLACVHVLPNVSGITNLLQVSNATKQSPLSVFAIHLVELTGRTTASLLIMNDECKPKANFSDRVRAESDQIAETFEAMEVNNDAMTVQTITAVSPYATMHEDICVLAEDKRVCFIILPYHKHLTPDGRMGEGNSSHAEINQNVLSHAPCSVGILVDRGMAMVRSESFRGESMKREVAMLFVGGPDDREALSYAWRMVGQHVIKLTVVRFVPGREALISSGKVAAEYEREKQVDDECIYEFNFKTMNDSSVKYIEKVVNDGQDTIATIREMEDNNSYDLYVVGRGYNSDSPVTAGLNDWSSSPELGTIGDTLASSNFTMHASVLVIQQYSATKRQAAVTAAAATTVMGAVAGVTGNNLESAGGDAKMTRDAHEPFMKSMYEDEDEDDEEDHQYGIHR.

Transmembrane regions (helical) follow at residues 43-63 (SGST…VANL), 75-95 (LYLP…PSVL), 112-132 (MVLE…LGLG), 146-166 (VIIA…LYYL), 175-195 (IISG…PDLA), 212-232 (AMCA…FGFA), 242-262 (KMMP…IFVI), 283-303 (HVWF…ACGV), 336-356 (GILM…GFML), 362-382 (FMMV…TVIT), 393-413 (AFAI…VLNA), and 427-447 (HMTI…AFAY). A disordered region spans residues 848–867 (SMYEDEDEDDEEDHQYGIHR). A compositionally biased stretch (acidic residues) spans 851 to 860 (EDEDEDDEED).

This sequence belongs to the monovalent cation:proton antiporter 2 (CPA2) transporter (TC 2.A.37) family. CHX (TC 2.A.37.4) subfamily. Specifically expressed in flower buds and pollen. Expressed in leaves, roots and stems.

It is found in the plastid. Its subcellular location is the chloroplast membrane. The protein localises to the endoplasmic reticulum membrane. Functionally, operates as a K(+)/H(+) antiporter or Na(+)/H(+) antiporter of the chloroplast envelope that functions in pH homeostasis and chloroplast development. Monovalent cation transporter with a preference for Cs(+), K(+) and Rb(+) relative to Na(+) or Li(+). Required for pollen tube guidance, but not for normal pollen development. May also be involved in the development or function of the female gametophyte. This Arabidopsis thaliana (Mouse-ear cress) protein is Cation/H(+) antiporter 23, chloroplastic (CHX23).